A 424-amino-acid chain; its full sequence is Glutamyl-tRNA reductase (424 aa).

Substrate contacts are provided by residues 49 to 52 (TCNR), Ser109, 114 to 116 (EDQ), and Gln120. Catalysis depends on Cys50, which acts as the Nucleophile. NADP(+) is bound at residue 189–194 (GFGKMS).

Belongs to the glutamyl-tRNA reductase family. Homodimer.

The enzyme catalyses (S)-4-amino-5-oxopentanoate + tRNA(Glu) + NADP(+) = L-glutamyl-tRNA(Glu) + NADPH + H(+). It functions in the pathway porphyrin-containing compound metabolism; protoporphyrin-IX biosynthesis; 5-aminolevulinate from L-glutamyl-tRNA(Glu): step 1/2. Functionally, catalyzes the NADPH-dependent reduction of glutamyl-tRNA(Glu) to glutamate 1-semialdehyde (GSA). The protein is Glutamyl-tRNA reductase of Alkaliphilus metalliredigens (strain QYMF).